A 127-amino-acid polypeptide reads, in one-letter code: Glycine cleavage system H protein (127 aa).

One can recognise a Lipoyl-binding domain in the interval 24 to 106 (TATLGISAFA…YGEGWLVKVQ (83 aa)). K65 bears the N6-lipoyllysine mark.

This sequence belongs to the GcvH family. As to quaternary structure, the glycine cleavage system is composed of four proteins: P, T, L and H. (R)-lipoate is required as a cofactor.

Functionally, the glycine cleavage system catalyzes the degradation of glycine. The H protein shuttles the methylamine group of glycine from the P protein to the T protein. This Thermosynechococcus vestitus (strain NIES-2133 / IAM M-273 / BP-1) protein is Glycine cleavage system H protein.